The chain runs to 354 residues: Regulatory protein RapD (354 aa).

TPR repeat units lie at residues 64 to 105 (FENQ…VKTA), 107 to 126 (KHAV…IHNT), 130 to 163 (ADLY…YLHQ), 171 to 204 (ITCK…TQQL), 211 to 244 (CHAY…QEFE), and 321 to 353 (IEAW…FIMR).

This sequence belongs to the Rap family.

Its subcellular location is the cytoplasm. This chain is Regulatory protein RapD (rapD), found in Bacillus subtilis (strain 168).